Reading from the N-terminus, the 208-residue chain is NAD(P)H dehydrogenase (quinone) (208 aa).

Residues 4-199 (VNVIFHSIHG…AMARYQGRHV (196 aa)) form the Flavodoxin-like domain. FMN-binding positions include 10–15 (SIHGHT) and 87–89 (TRY). W107 serves as a coordination point for substrate. Residues 122-128 (SSGTQHG) and H143 contribute to the FMN site.

The protein belongs to the WrbA family. It depends on FMN as a cofactor.

The enzyme catalyses a quinone + NADH + H(+) = a quinol + NAD(+). It catalyses the reaction a quinone + NADPH + H(+) = a quinol + NADP(+). The chain is NAD(P)H dehydrogenase (quinone) from Methanosarcina barkeri (strain Fusaro / DSM 804).